A 415-amino-acid polypeptide reads, in one-letter code: MAQANLSEILFKPSFKHPETSTLVLRARSKISAELHSTLEGNTVSNWYRMLNPLLWAWRGVDPIEINEVLARIAVADVEHTNDKWLDTVVGYRNGNWIYEWVHQGMLWQQRALEQQDPLTGGQYWLNAANFYSIAGYPHLKGDELAEQAEALSNRAYEEAALLLPYQLKELEFRIEGGSSITGFLHLPEKGEAPFPTVLMCGSLDTLQTDYHRLFRDYLAPHGIAMLTIDMPSIGSSYKWKLTQDSSFLHQQVLTQLTTVPWIDHQRVTAFGFRFGANVAVRLAYLEPQRLRGVACLGPVVHRLLCDSSTQKHVPDMYMDVLASRMGMANASDHVLKVELNSYSLKTQGLLGRRCPTPMLAGYWEQDPLSPKEESQLIVSSSMDGKLIAIPRKPVYSSFHKALLQMSHWMKDKMR.

This sequence belongs to the FrsA family.

The enzyme catalyses a carboxylic ester + H2O = an alcohol + a carboxylate + H(+). Functionally, catalyzes the hydrolysis of esters. The polypeptide is Esterase FrsA (Serratia proteamaculans (strain 568)).